The primary structure comprises 359 residues: Fructose-bisphosphate aldolase class 2 (359 aa).

Ser61 contributes to the D-glyceraldehyde 3-phosphate binding site. Catalysis depends on Asp110, which acts as the Proton donor. Zn(2+) contacts are provided by His111, Asp145, Glu175, and His227. Gly228 is a dihydroxyacetone phosphate binding site. Zn(2+) is bound at residue His265. Residues 266-268 (GGS) and 287-290 (NIDT) each bind dihydroxyacetone phosphate.

Belongs to the class II fructose-bisphosphate aldolase family. The cofactor is Zn(2+).

The catalysed reaction is beta-D-fructose 1,6-bisphosphate = D-glyceraldehyde 3-phosphate + dihydroxyacetone phosphate. Its pathway is carbohydrate degradation; glycolysis; D-glyceraldehyde 3-phosphate and glycerone phosphate from D-glucose: step 4/4. In terms of biological role, catalyzes the aldol condensation of dihydroxyacetone phosphate (DHAP or glycerone-phosphate) with glyceraldehyde 3-phosphate (G3P) to form fructose 1,6-bisphosphate (FBP) in gluconeogenesis and the reverse reaction in glycolysis. This chain is Fructose-bisphosphate aldolase class 2 (fbaA), found in Buchnera aphidicola subsp. Schizaphis graminum (strain Sg).